The chain runs to 447 residues: Tubulin alpha chain (447 aa).

Residues glutamine 11, glutamate 71, glycine 144, threonine 145, threonine 179, asparagine 206, and asparagine 228 each contribute to the GTP site. Mg(2+) is bound at residue glutamate 71. Glutamate 254 is an active-site residue.

This sequence belongs to the tubulin family. Dimer of alpha and beta chains. A typical microtubule is a hollow water-filled tube with an outer diameter of 25 nm and an inner diameter of 15 nM. Alpha-beta heterodimers associate head-to-tail to form protofilaments running lengthwise along the microtubule wall with the beta-tubulin subunit facing the microtubule plus end conferring a structural polarity. Microtubules usually have 13 protofilaments but different protofilament numbers can be found in some organisms and specialized cells. Requires Mg(2+) as cofactor.

The protein resides in the cytoplasm. It localises to the cytoskeleton. It catalyses the reaction GTP + H2O = GDP + phosphate + H(+). In terms of biological role, tubulin is the major constituent of microtubules, a cylinder consisting of laterally associated linear protofilaments composed of alpha- and beta-tubulin heterodimers. Microtubules grow by the addition of GTP-tubulin dimers to the microtubule end, where a stabilizing cap forms. Below the cap, tubulin dimers are in GDP-bound state, owing to GTPase activity of alpha-tubulin. This chain is Tubulin alpha chain (TUBA), found in Avena sativa (Oat).